We begin with the raw amino-acid sequence, 109 residues long: UPF0122 protein ABC2295 (109 aa).

Belongs to the UPF0122 family.

Might take part in the signal recognition particle (SRP) pathway. This is inferred from the conservation of its genetic proximity to ftsY/ffh. May be a regulatory protein. The polypeptide is UPF0122 protein ABC2295 (Shouchella clausii (strain KSM-K16) (Alkalihalobacillus clausii)).